We begin with the raw amino-acid sequence, 337 residues long: Undecaprenyl-phosphate 4-deoxy-4-formamido-L-arabinose transferase (337 aa).

Helical transmembrane passes span 235-255 (LSII…LLIV) and 270-290 (FVLF…MGLL).

This sequence belongs to the glycosyltransferase 2 family.

The protein localises to the cell inner membrane. It catalyses the reaction UDP-4-deoxy-4-formamido-beta-L-arabinose + di-trans,octa-cis-undecaprenyl phosphate = 4-deoxy-4-formamido-alpha-L-arabinopyranosyl di-trans,octa-cis-undecaprenyl phosphate + UDP. It participates in glycolipid biosynthesis; 4-amino-4-deoxy-alpha-L-arabinose undecaprenyl phosphate biosynthesis; 4-amino-4-deoxy-alpha-L-arabinose undecaprenyl phosphate from UDP-4-deoxy-4-formamido-beta-L-arabinose and undecaprenyl phosphate: step 1/2. Its pathway is bacterial outer membrane biogenesis; lipopolysaccharide biosynthesis. In terms of biological role, catalyzes the transfer of 4-deoxy-4-formamido-L-arabinose from UDP to undecaprenyl phosphate. The modified arabinose is attached to lipid A and is required for resistance to polymyxin and cationic antimicrobial peptides. This chain is Undecaprenyl-phosphate 4-deoxy-4-formamido-L-arabinose transferase, found in Pseudomonas syringae pv. syringae (strain B728a).